Here is a 400-residue protein sequence, read N- to C-terminus: Chorismate synthase (400 aa).

NADP(+) contacts are provided by Arg40 and Arg46. Residues 135-137 (RAS), 257-258 (QA), Gly301, 316-320 (KPIST), and Arg342 contribute to the FMN site.

Belongs to the chorismate synthase family. Homotetramer. FMNH2 serves as cofactor.

The catalysed reaction is 5-O-(1-carboxyvinyl)-3-phosphoshikimate = chorismate + phosphate. It participates in metabolic intermediate biosynthesis; chorismate biosynthesis; chorismate from D-erythrose 4-phosphate and phosphoenolpyruvate: step 7/7. Its function is as follows. Catalyzes the anti-1,4-elimination of the C-3 phosphate and the C-6 proR hydrogen from 5-enolpyruvylshikimate-3-phosphate (EPSP) to yield chorismate, which is the branch point compound that serves as the starting substrate for the three terminal pathways of aromatic amino acid biosynthesis. This reaction introduces a second double bond into the aromatic ring system. The polypeptide is Chorismate synthase (Tropheryma whipplei (strain TW08/27) (Whipple's bacillus)).